A 75-amino-acid polypeptide reads, in one-letter code: Sec-independent protein translocase protein TatA (75 aa).

Residues M1–G21 traverse the membrane as a helical segment. The segment at K44–S75 is disordered.

It belongs to the TatA/E family. The Tat system comprises two distinct complexes: a TatABC complex, containing multiple copies of TatA, TatB and TatC subunits, and a separate TatA complex, containing only TatA subunits. Substrates initially bind to the TatABC complex, which probably triggers association of the separate TatA complex to form the active translocon.

It localises to the cell inner membrane. In terms of biological role, part of the twin-arginine translocation (Tat) system that transports large folded proteins containing a characteristic twin-arginine motif in their signal peptide across membranes. TatA could form the protein-conducting channel of the Tat system. The polypeptide is Sec-independent protein translocase protein TatA (Bordetella petrii (strain ATCC BAA-461 / DSM 12804 / CCUG 43448)).